The sequence spans 64 residues: Translational regulator CsrA 1 (64 aa).

This sequence belongs to the CsrA/RsmA family. Homodimer; the beta-strands of each monomer intercalate to form a hydrophobic core, while the alpha-helices form wings that extend away from the core.

It localises to the cytoplasm. Its function is as follows. A key translational regulator that binds mRNA to regulate translation initiation and/or mRNA stability. Mediates global changes in gene expression, shifting from rapid growth to stress survival by linking envelope stress, the stringent response and the catabolite repression systems. Usually binds in the 5'-UTR; binding at or near the Shine-Dalgarno sequence prevents ribosome-binding, repressing translation, binding elsewhere in the 5'-UTR can activate translation and/or stabilize the mRNA. Its function is antagonized by small RNA(s). The chain is Translational regulator CsrA 1 from Pseudomonas syringae pv. tomato (strain ATCC BAA-871 / DC3000).